A 378-amino-acid chain; its full sequence is uncharacterized protein (378 aa).

This is an uncharacterized protein from Orgyia pseudotsugata multicapsid polyhedrosis virus (OpMNPV).